A 370-amino-acid polypeptide reads, in one-letter code: tRNA-specific 2-thiouridylase MnmA (370 aa).

Residues 24–31 and leucine 50 each bind ATP; that span reads AMSGGVDS. Catalysis depends on cysteine 119, which acts as the Nucleophile. Cysteine 119 and cysteine 215 are oxidised to a cystine. ATP is bound at residue glycine 143. The tract at residues 165 to 167 is interaction with tRNA; that stretch reads KDQ. Cysteine 215 acts as the Cysteine persulfide intermediate in catalysis.

This sequence belongs to the MnmA/TRMU family.

The protein resides in the cytoplasm. It carries out the reaction S-sulfanyl-L-cysteinyl-[protein] + uridine(34) in tRNA + AH2 + ATP = 2-thiouridine(34) in tRNA + L-cysteinyl-[protein] + A + AMP + diphosphate + H(+). Its function is as follows. Catalyzes the 2-thiolation of uridine at the wobble position (U34) of tRNA, leading to the formation of s(2)U34. The chain is tRNA-specific 2-thiouridylase MnmA from Wolbachia pipientis wMel.